We begin with the raw amino-acid sequence, 910 residues long: Protein translocase subunit SecA (910 aa).

Residues Gln86, Gly104–Thr108, and Asp508 each bind ATP. Zn(2+) contacts are provided by Cys894, Cys896, Cys905, and Cys906.

Belongs to the SecA family. As to quaternary structure, monomer and homodimer. Part of the essential Sec protein translocation apparatus which comprises SecA, SecYEG and auxiliary proteins SecDF. Other proteins may also be involved. Zn(2+) is required as a cofactor.

It is found in the cell membrane. Its subcellular location is the cytoplasm. The catalysed reaction is ATP + H2O + cellular proteinSide 1 = ADP + phosphate + cellular proteinSide 2.. Functionally, part of the Sec protein translocase complex. Interacts with the SecYEG preprotein conducting channel. Has a central role in coupling the hydrolysis of ATP to the transfer of proteins into and across the cell membrane, serving as an ATP-driven molecular motor driving the stepwise translocation of polypeptide chains across the membrane. This Acetivibrio thermocellus (strain ATCC 27405 / DSM 1237 / JCM 9322 / NBRC 103400 / NCIMB 10682 / NRRL B-4536 / VPI 7372) (Clostridium thermocellum) protein is Protein translocase subunit SecA.